A 94-amino-acid polypeptide reads, in one-letter code: uncharacterized protein (94 aa).

This is an uncharacterized protein from Treponema pallidum (strain Nichols).